The primary structure comprises 200 residues: ADP-ribosylation factor-like protein 4A (200 aa).

Residue Gly2 is the site of N-myristoyl glycine attachment. GTP is bound by residues 27–34, 75–79, and 134–137; these read GLDCAGKT, DVGGQ, and NKQD.

It belongs to the small GTPase superfamily. Arf family. As to quaternary structure, interacts with CYTH2. Interacts with KPNA2; the interaction is direct. Does not interact with ARL4A. Myristoylated. As to expression, expressed strongly in testis and liver. Expressed slightly in heart, spleen, lung and kidney.

It is found in the cell membrane. The protein resides in the cytoplasm. The protein localises to the nucleus. Its subcellular location is the nucleolus. Its function is as follows. Small GTP-binding protein which cycles between an inactive GDP-bound and an active GTP-bound form, and the rate of cycling is regulated by guanine nucleotide exchange factors (GEF) and GTPase-activating proteins (GAP). GTP-binding protein that does not act as an allosteric activator of the cholera toxin catalytic subunit. Recruits CYTH1, CYTH2, CYTH3 and CYTH4 to the plasma membrane in GDP-bound form. In Mus musculus (Mouse), this protein is ADP-ribosylation factor-like protein 4A (Arl4a).